Reading from the N-terminus, the 623-residue chain is Xaa-Pro aminopeptidase 1 (623 aa).

Arginine 77 is a binding site for a peptide. The residue at position 304 (lysine 304) is an N6-acetyllysine. Histidine 395 is an a peptide binding site. 3 residues coordinate Mn(2+): aspartate 415, aspartate 426, and histidine 489. The a peptide site is built by histidine 489, histidine 498, and glutamate 523. Mn(2+) is bound by residues glutamate 523 and glutamate 537.

Belongs to the peptidase M24B family. Homodimer. Mn(2+) is required as a cofactor.

Its subcellular location is the cytoplasm. It is found in the cytosol. The catalysed reaction is Release of any N-terminal amino acid, including proline, that is linked to proline, even from a dipeptide or tripeptide.. Functionally, metalloaminopeptidase that catalyzes the removal of a penultimate prolyl residue from the N-termini of peptides, such as Arg-Pro-Pro. Contributes to the degradation of bradykinin. In Mus musculus (Mouse), this protein is Xaa-Pro aminopeptidase 1.